We begin with the raw amino-acid sequence, 97 residues long: Integration host factor subunit beta (97 aa).

The protein belongs to the bacterial histone-like protein family. As to quaternary structure, heterodimer of an alpha and a beta chain.

In terms of biological role, this protein is one of the two subunits of integration host factor, a specific DNA-binding protein that functions in genetic recombination as well as in transcriptional and translational control. This Buchnera aphidicola subsp. Cinara cedri (strain Cc) protein is Integration host factor subunit beta.